The following is a 283-amino-acid chain: Probable voltage-dependent anion-selective channel (283 aa).

The protein belongs to the eukaryotic mitochondrial porin family.

It localises to the mitochondrion outer membrane. Functionally, forms a channel through the cell membrane that allows diffusion of small hydrophilic molecules. Plays a role in maintaining mitochondrial morphology. This is Probable voltage-dependent anion-selective channel from Caenorhabditis elegans.